A 561-amino-acid polypeptide reads, in one-letter code: Putative transport protein YbjL (561 aa).

5 consecutive transmembrane segments (helical) span residues Leu8–Gly28, Leu32–Gln52, Phe66–Phe86, Met94–Phe114, and Asn158–Ala178. 2 RCK C-terminal domains span residues Arg200–Asn288 and Val292–Phe373. Transmembrane regions (helical) follow at residues Leu383–Phe403, Phe406–Leu426, Phe447–Gly467, Met475–Ala495, and Gly537–Trp557.

This sequence belongs to the AAE transporter (TC 2.A.81) family. YbjL subfamily.

Its subcellular location is the cell membrane. In Salmonella choleraesuis (strain SC-B67), this protein is Putative transport protein YbjL.